We begin with the raw amino-acid sequence, 146 residues long: Large ribosomal subunit protein bL19 (146 aa).

The protein belongs to the bacterial ribosomal protein bL19 family.

This protein is located at the 30S-50S ribosomal subunit interface and may play a role in the structure and function of the aminoacyl-tRNA binding site. The polypeptide is Large ribosomal subunit protein bL19 (Bartonella quintana (strain Toulouse) (Rochalimaea quintana)).